A 271-amino-acid chain; its full sequence is Cyanophycinase (271 aa).

Active-site charge relay system residues include S132, H174, and E201.

The protein belongs to the peptidase S51 family. As to quaternary structure, homodimer.

The enzyme catalyses [L-4-(L-arginin-2-N-yl)aspartate](n) + H2O = [L-4-(L-arginin-2-N-yl)aspartate](n-1) + L-4-(L-arginin-2-N-yl)aspartate. Functionally, exopeptidase that catalyzes the hydrolytic cleavage of multi-L-arginyl-poly-L-aspartic acid (cyanophycin; a water-insoluble reserve polymer) into aspartate-arginine dipeptides. The sequence is that of Cyanophycinase (cphB) from Synechocystis sp. (strain ATCC 27184 / PCC 6803 / Kazusa).